The chain runs to 253 residues: Thiamine import ATP-binding protein ThiQ (253 aa).

Positions 8–236 (VRLDKVSFSY…AGPEAFRRYI (229 aa)) constitute an ABC transporter domain. Position 38–45 (38–45 (GPSGSGKS)) interacts with ATP.

The protein belongs to the ABC transporter superfamily. Thiamine importer (TC 3.A.1.19.1) family. In terms of assembly, the complex is composed of two ATP-binding proteins (ThiQ), two transmembrane proteins (ThiP) and a solute-binding protein (ThiB).

It is found in the cell inner membrane. The enzyme catalyses thiamine(out) + ATP + H2O = thiamine(in) + ADP + phosphate + H(+). In terms of biological role, part of the ABC transporter complex ThiBPQ involved in thiamine import. Responsible for energy coupling to the transport system. In Mesorhizobium japonicum (strain LMG 29417 / CECT 9101 / MAFF 303099) (Mesorhizobium loti (strain MAFF 303099)), this protein is Thiamine import ATP-binding protein ThiQ.